The chain runs to 267 residues: Phosphate import ATP-binding protein PstB 2 (267 aa).

Residues 21–262 enclose the ABC transporter domain; sequence LATKDLHVYY…AQCQSTNDYV (242 aa). Residue 53-60 coordinates ATP; it reads GPSGCGKS.

Belongs to the ABC transporter superfamily. Phosphate importer (TC 3.A.1.7) family. In terms of assembly, the complex is composed of two ATP-binding proteins (PstB), two transmembrane proteins (PstC and PstA) and a solute-binding protein (PstS).

The protein localises to the cell membrane. The catalysed reaction is phosphate(out) + ATP + H2O = ADP + 2 phosphate(in) + H(+). In terms of biological role, part of the ABC transporter complex PstSACB involved in phosphate import. Responsible for energy coupling to the transport system. This Streptococcus pyogenes serotype M1 protein is Phosphate import ATP-binding protein PstB 2.